The following is a 183-amino-acid chain: Apo-citrate lyase phosphoribosyl-dephospho-CoA transferase (183 aa).

This sequence belongs to the CitX family.

It catalyses the reaction apo-[citrate lyase ACP] + 2'-(5''-triphospho-alpha-D-ribosyl)-3'-dephospho-CoA = holo-[citrate lyase ACP] + diphosphate. Functionally, transfers 2-(5''-triphosphoribosyl)-3'-dephosphocoenzyme-A on a serine residue to the apo-acyl carrier protein (gamma chain) of the citrate lyase to yield holo-acyl carrier protein. This chain is Apo-citrate lyase phosphoribosyl-dephospho-CoA transferase, found in Escherichia coli O45:K1 (strain S88 / ExPEC).